The primary structure comprises 464 residues: Phosphoglucosamine mutase (464 aa).

Ser112 serves as the catalytic Phosphoserine intermediate. Residues Ser112, Asp252, Asp254, and Asp256 each coordinate Mg(2+). A Phosphoserine modification is found at Ser112.

The protein belongs to the phosphohexose mutase family. Mg(2+) is required as a cofactor. Post-translationally, activated by phosphorylation.

It carries out the reaction alpha-D-glucosamine 1-phosphate = D-glucosamine 6-phosphate. Functionally, catalyzes the conversion of glucosamine-6-phosphate to glucosamine-1-phosphate. This is Phosphoglucosamine mutase from Synechococcus sp. (strain CC9605).